A 183-amino-acid polypeptide reads, in one-letter code: Bifunctional protein PyrR (183 aa).

Residues 102 to 114 (VVLVDDVLYTGRT) carry the PRPP-binding motif.

The protein belongs to the purine/pyrimidine phosphoribosyltransferase family. PyrR subfamily. In terms of assembly, homodimer and homohexamer; in equilibrium.

The enzyme catalyses UMP + diphosphate = 5-phospho-alpha-D-ribose 1-diphosphate + uracil. Its function is as follows. Regulates transcriptional attenuation of the pyrimidine nucleotide (pyr) operon by binding in a uridine-dependent manner to specific sites on pyr mRNA. This disrupts an antiterminator hairpin in the RNA and favors formation of a downstream transcription terminator, leading to a reduced expression of downstream genes. Also displays a weak uracil phosphoribosyltransferase activity which is not physiologically significant. The polypeptide is Bifunctional protein PyrR (Listeria monocytogenes serotype 4a (strain HCC23)).